The chain runs to 521 residues: GMP synthase [glutamine-hydrolyzing] (521 aa).

The Glutamine amidotransferase type-1 domain occupies 5-203 (KILILDFGSQ…VHEICGCGRD (199 aa)). Catalysis depends on C82, which acts as the Nucleophile. Catalysis depends on residues H177 and E179. The GMPS ATP-PPase domain maps to 204–396 (WNMPDYVNEA…LGLPHEMVYR (193 aa)). 231–237 (SGGVDSS) contacts ATP.

As to quaternary structure, homodimer.

The enzyme catalyses XMP + L-glutamine + ATP + H2O = GMP + L-glutamate + AMP + diphosphate + 2 H(+). The protein operates within purine metabolism; GMP biosynthesis; GMP from XMP (L-Gln route): step 1/1. Catalyzes the synthesis of GMP from XMP. The polypeptide is GMP synthase [glutamine-hydrolyzing] (Aromatoleum aromaticum (strain DSM 19018 / LMG 30748 / EbN1) (Azoarcus sp. (strain EbN1))).